The following is a 431-amino-acid chain: Mannan endo-1,4-beta-mannosidase 5 (431 aa).

The first 24 residues, 1-24, serve as a signal peptide directing secretion; it reads MVPTRNRPMLRILGFFICAAFIYL. N45 is a glycosylation site (N-linked (GlcNAc...) asparagine). Substrate is bound at residue W97. N168 carries an N-linked (GlcNAc...) asparagine glycan. Position 213 (N213) interacts with substrate. E214 functions as the Proton donor in the catalytic mechanism. N282 carries an N-linked (GlcNAc...) asparagine glycan. Position 294 (Y294) interacts with substrate. Residue N301 is glycosylated (N-linked (GlcNAc...) asparagine). The active-site Nucleophile is E334. W376 is a binding site for substrate.

Belongs to the glycosyl hydrolase 5 (cellulase A) family. Expressed in stems.

The protein resides in the secreted. The catalysed reaction is Random hydrolysis of (1-&gt;4)-beta-D-mannosidic linkages in mannans, galactomannans and glucomannans.. The sequence is that of Mannan endo-1,4-beta-mannosidase 5 (MAN5) from Arabidopsis thaliana (Mouse-ear cress).